The primary structure comprises 312 residues: Aspartate carbamoyltransferase catalytic subunit (312 aa).

Carbamoyl phosphate contacts are provided by Arg58 and Thr59. Position 86 (Lys86) interacts with L-aspartate. Residues Arg108, His136, and Gln139 each contribute to the carbamoyl phosphate site. Positions 169 and 223 each coordinate L-aspartate. Residues Gly264 and Pro265 each coordinate carbamoyl phosphate.

The protein belongs to the aspartate/ornithine carbamoyltransferase superfamily. ATCase family. Heterododecamer (2C3:3R2) of six catalytic PyrB chains organized as two trimers (C3), and six regulatory PyrI chains organized as three dimers (R2).

It carries out the reaction carbamoyl phosphate + L-aspartate = N-carbamoyl-L-aspartate + phosphate + H(+). The protein operates within pyrimidine metabolism; UMP biosynthesis via de novo pathway; (S)-dihydroorotate from bicarbonate: step 2/3. Catalyzes the condensation of carbamoyl phosphate and aspartate to form carbamoyl aspartate and inorganic phosphate, the committed step in the de novo pyrimidine nucleotide biosynthesis pathway. In Desulforapulum autotrophicum (strain ATCC 43914 / DSM 3382 / VKM B-1955 / HRM2) (Desulfobacterium autotrophicum), this protein is Aspartate carbamoyltransferase catalytic subunit.